A 221-amino-acid polypeptide reads, in one-letter code: 2-C-methyl-D-erythritol 4-phosphate cytidylyltransferase (221 aa).

Belongs to the IspD/TarI cytidylyltransferase family. IspD subfamily.

The catalysed reaction is 2-C-methyl-D-erythritol 4-phosphate + CTP + H(+) = 4-CDP-2-C-methyl-D-erythritol + diphosphate. Its pathway is isoprenoid biosynthesis; isopentenyl diphosphate biosynthesis via DXP pathway; isopentenyl diphosphate from 1-deoxy-D-xylulose 5-phosphate: step 2/6. Functionally, catalyzes the formation of 4-diphosphocytidyl-2-C-methyl-D-erythritol from CTP and 2-C-methyl-D-erythritol 4-phosphate (MEP). The polypeptide is 2-C-methyl-D-erythritol 4-phosphate cytidylyltransferase (Roseobacter denitrificans (strain ATCC 33942 / OCh 114) (Erythrobacter sp. (strain OCh 114))).